Consider the following 430-residue polypeptide: Adenylosuccinate synthetase (430 aa).

GTP contacts are provided by residues 11–17 (GDEGKGK) and 39–41 (GHT). Residue D12 is the Proton acceptor of the active site. D12 and G39 together coordinate Mg(2+). IMP-binding positions include 12–15 (DEGK), 37–40 (NAGH), T130, R144, N226, T241, and R305. H40 acts as the Proton donor in catalysis. 301-307 (VTTGRKR) contacts substrate. GTP contacts are provided by residues R307, 333–335 (KLD), and 415–417 (GTG).

The protein belongs to the adenylosuccinate synthetase family. As to quaternary structure, homodimer. Requires Mg(2+) as cofactor.

It is found in the cytoplasm. It catalyses the reaction IMP + L-aspartate + GTP = N(6)-(1,2-dicarboxyethyl)-AMP + GDP + phosphate + 2 H(+). It functions in the pathway purine metabolism; AMP biosynthesis via de novo pathway; AMP from IMP: step 1/2. Plays an important role in the de novo pathway and in the salvage pathway of purine nucleotide biosynthesis. Catalyzes the first committed step in the biosynthesis of AMP from IMP. This chain is Adenylosuccinate synthetase, found in Scheffersomyces stipitis (strain ATCC 58785 / CBS 6054 / NBRC 10063 / NRRL Y-11545) (Yeast).